We begin with the raw amino-acid sequence, 111 residues long: uncharacterized protein (111 aa).

To M.tuberculosis Rv1271c.

This is an uncharacterized protein from Mycobacterium bovis (strain ATCC BAA-935 / AF2122/97).